Consider the following 101-residue polypeptide: Small ubiquitin-related modifier 1 (101 aa).

N-acetylserine is present on serine 2. Serine 2 bears the Phosphoserine mark. Residue lysine 7 forms a Glycyl lysine isopeptide (Lys-Gly) (interchain with G-Cter in SUMO1); alternate linkage. Lysine 7 is covalently cross-linked (Glycyl lysine isopeptide (Lys-Gly) (interchain with G-Cter in SUMO2); alternate). Serine 9 bears the Phosphoserine mark. Residues lysine 16, lysine 17, and lysine 23 each participate in a glycyl lysine isopeptide (Lys-Gly) (interchain with G-Cter in SUMO2) cross-link. The interval 16–25 (KKEGEYIKLK) is (Microbial infection) Interaction with Tula hantavirus. The 78-residue stretch at 20–97 (EYIKLKVIGQ…IEVYQEQTGG (78 aa)) folds into the Ubiquitin-like domain. A Glycyl lysine isopeptide (Lys-Gly) (interchain with G-Cter in SUMO1) cross-link involves residue lysine 25. Serine 32 carries the post-translational modification Phosphoserine. Glycyl lysine isopeptide (Lys-Gly) (interchain with G-Cter in SUMO2) cross-links involve residues lysine 37, lysine 39, lysine 45, and lysine 46. The tract at residues 37–40 (KVKM) is (Microbial infection) Interaction with Tula hantavirus. Glycine 97 is covalently cross-linked (Glycyl lysine isopeptide (Gly-Lys) (interchain with K-? in acceptor proteins)). A propeptide spanning residues 98–101 (HSTV) is cleaved from the precursor.

The protein belongs to the ubiquitin family. SUMO subfamily. In terms of assembly, covalently attached to KCNB1; UBE2I increases cross-linking with KCNB1 and PIAS1 decreases cross-links with KCNB1. Interacts with SAE2, RANBP2, PIAS1 and PIAS2. Interacts with PRKN. Covalently attached to a number of proteins such as IKFZ1, PML, RANGAP1, HIPK2, SP100, p53, p73-alpha, MDM2, JUN, DNMT3B and TDG. Also interacts with HIF1A, HIPK2, HIPK3, CHD3, EXOSC9, RAD51 and RAD52. Interacts with USP25 (via ts SIM domain); the interaction weakly sumoylates USP25. Interacts with SIMC1, CASP8AP2, RNF111 and SOBP (via SIM domains). Interacts with BHLHE40/DEC1. Interacts with RWDD3. Interacts with UBE2I/UBC9 and this interaction is enhanced in the presence of RWDD3. Interacts with MTA1. Interacts with SENP2. Interacts with HINT1. As to quaternary structure, (Microbial infection) Interacts with Epstein-barr virus BGLF4. (Microbial infection) Interacts (via N-terminus) with Tula hantavirus nucleoprotein. In terms of assembly, (Microbial infection) Interacts (via N-terminus) with Hantaan hantavirus nucleoprotein. Cleavage of precursor form by SENP1 or SENP2 is necessary for function. Post-translationally, polymeric SUMO1 chains undergo polyubiquitination by RNF4.

Its subcellular location is the nucleus membrane. The protein localises to the nucleus speckle. It is found in the cytoplasm. It localises to the nucleus. The protein resides in the PML body. Its subcellular location is the cell membrane. In terms of biological role, ubiquitin-like protein that can be covalently attached to proteins as a monomer or a lysine-linked polymer. Covalent attachment via an isopeptide bond to its substrates requires prior activation by the E1 complex SAE1-SAE2 and linkage to the E2 enzyme UBE2I, and can be promoted by E3 ligases such as PIAS1-4, RANBP2 or CBX4. This post-translational modification on lysine residues of proteins plays a crucial role in a number of cellular processes such as nuclear transport, DNA replication and repair, mitosis and signal transduction. Involved for instance in targeting RANGAP1 to the nuclear pore complex protein RANBP2. Covalently attached to the voltage-gated potassium channel KCNB1; this modulates the gating characteristics of KCNB1. Polymeric SUMO1 chains are also susceptible to polyubiquitination which functions as a signal for proteasomal degradation of modified proteins. May also regulate a network of genes involved in palate development. Covalently attached to ZFHX3. This is Small ubiquitin-related modifier 1 (SUMO1) from Homo sapiens (Human).